Here is a 259-residue protein sequence, read N- to C-terminus: Dihydroorotate dehydrogenase B (NAD(+)), electron transfer subunit (259 aa).

The 101-residue stretch at 2–102 (MQKQNMIVVN…LGPLGHGFPV (101 aa)) folds into the FAD-binding FR-type domain. FAD is bound by residues 53–56 (RPIS), 70–72 (LYR), and 77–78 (GT). 4 residues coordinate [2Fe-2S] cluster: Cys221, Cys226, Cys229, and Cys246.

Belongs to the PyrK family. As to quaternary structure, heterotetramer of 2 PyrK and 2 PyrD type B subunits. [2Fe-2S] cluster serves as cofactor. It depends on FAD as a cofactor.

The protein operates within pyrimidine metabolism; UMP biosynthesis via de novo pathway; orotate from (S)-dihydroorotate (NAD(+) route): step 1/1. Functionally, responsible for channeling the electrons from the oxidation of dihydroorotate from the FMN redox center in the PyrD type B subunit to the ultimate electron acceptor NAD(+). The polypeptide is Dihydroorotate dehydrogenase B (NAD(+)), electron transfer subunit (Bacillus cereus (strain 03BB102)).